Consider the following 557-residue polypeptide: Dihydroxy-acid dehydratase (557 aa).

Residue aspartate 78 coordinates Mg(2+). Cysteine 119 provides a ligand contact to [2Fe-2S] cluster. Residues aspartate 120 and lysine 121 each contribute to the Mg(2+) site. An N6-carboxylysine modification is found at lysine 121. Position 192 (cysteine 192) interacts with [2Fe-2S] cluster. Glutamate 446 serves as a coordination point for Mg(2+). Residue serine 472 is the Proton acceptor of the active site.

The protein belongs to the IlvD/Edd family. As to quaternary structure, homodimer. It depends on [2Fe-2S] cluster as a cofactor. Requires Mg(2+) as cofactor.

It carries out the reaction (2R)-2,3-dihydroxy-3-methylbutanoate = 3-methyl-2-oxobutanoate + H2O. It catalyses the reaction (2R,3R)-2,3-dihydroxy-3-methylpentanoate = (S)-3-methyl-2-oxopentanoate + H2O. It participates in amino-acid biosynthesis; L-isoleucine biosynthesis; L-isoleucine from 2-oxobutanoate: step 3/4. It functions in the pathway amino-acid biosynthesis; L-valine biosynthesis; L-valine from pyruvate: step 3/4. Its function is as follows. Functions in the biosynthesis of branched-chain amino acids. Catalyzes the dehydration of (2R,3R)-2,3-dihydroxy-3-methylpentanoate (2,3-dihydroxy-3-methylvalerate) into 2-oxo-3-methylpentanoate (2-oxo-3-methylvalerate) and of (2R)-2,3-dihydroxy-3-methylbutanoate (2,3-dihydroxyisovalerate) into 2-oxo-3-methylbutanoate (2-oxoisovalerate), the penultimate precursor to L-isoleucine and L-valine, respectively. In Campylobacter curvus (strain 525.92), this protein is Dihydroxy-acid dehydratase.